The chain runs to 411 residues: Tyrosine--tRNA ligase (411 aa).

Tyr-34 contributes to the L-tyrosine binding site. The short motif at 39–48 is the 'HIGH' region element; that stretch reads CTATSLHIGS. L-tyrosine is bound by residues Tyr-171 and Gln-175. The short motif at 231-235 is the 'KMSKS' region element; the sequence is KMGKT. Lys-234 is an ATP binding site. The region spanning 345–411 is the S4 RNA-binding domain; sequence ISAYELFHEA…GKKRHILVRV (67 aa).

Belongs to the class-I aminoacyl-tRNA synthetase family. TyrS type 1 subfamily. In terms of assembly, homodimer.

Its subcellular location is the cytoplasm. It catalyses the reaction tRNA(Tyr) + L-tyrosine + ATP = L-tyrosyl-tRNA(Tyr) + AMP + diphosphate + H(+). Its function is as follows. Catalyzes the attachment of tyrosine to tRNA(Tyr) in a two-step reaction: tyrosine is first activated by ATP to form Tyr-AMP and then transferred to the acceptor end of tRNA(Tyr). This Rickettsia massiliae (strain Mtu5) protein is Tyrosine--tRNA ligase.